The primary structure comprises 310 residues: Oxygen-dependent coproporphyrinogen-III oxidase (310 aa).

Residue serine 97 participates in substrate binding. A divalent metal cation-binding residues include histidine 101 and histidine 111. Histidine 111 (proton donor) is an active-site residue. Position 113–115 (113–115) interacts with substrate; the sequence is NFR. Residues histidine 150 and histidine 180 each contribute to the a divalent metal cation site. Residues 245–280 form an important for dimerization region; that stretch reads YVEFNLLYDRGTRFGLEFGGRTESILMSLPPRVVWR. 263 to 265 contacts substrate; the sequence is GGR.

Belongs to the aerobic coproporphyrinogen-III oxidase family. In terms of assembly, homodimer. A divalent metal cation is required as a cofactor.

Its subcellular location is the cytoplasm. It catalyses the reaction coproporphyrinogen III + O2 + 2 H(+) = protoporphyrinogen IX + 2 CO2 + 2 H2O. Its pathway is porphyrin-containing compound metabolism; protoporphyrin-IX biosynthesis; protoporphyrinogen-IX from coproporphyrinogen-III (O2 route): step 1/1. Functionally, involved in the heme biosynthesis. Catalyzes the aerobic oxidative decarboxylation of propionate groups of rings A and B of coproporphyrinogen-III to yield the vinyl groups in protoporphyrinogen-IX. The polypeptide is Oxygen-dependent coproporphyrinogen-III oxidase (Coxiella burnetii (strain Dugway 5J108-111)).